The chain runs to 106 residues: MNSILGLIDTVTNTIGKAQQIELDKAALGQQRELALQRMNLDRQALNNQVEQFNKLLEQRVQGPIQSVRLARAAGFRVDPYSYTNQNFYDDQLNAIRLSYRNLFKN.

The protein belongs to the vesivirus VP2 protein family. In terms of assembly, homooligomer. The portal-like structure consists in 12 copies of VP2. Interacts with capsid protein VP1.

The protein resides in the virion. The protein localises to the host cytoplasm. In terms of biological role, minor structural protein that forms a portal-like structure at a unique three-fold axis of symmetry, following binding to the host receptor. The virion attaches to feline junctional adhesion molecule A (F11R). Once attached, the virion is endocytosed. Acidification of the endosome induces conformational change of capsid protein thereby injecting virus genomic RNA into host cytoplasm. The channel formed by VP2 may allow the delivery of the viral genome through the host endosomal membrane. This Feline calicivirus (strain CFI/68 FIV) (FCV) protein is Minor capsid protein VP2.